Here is a 172-residue protein sequence, read N- to C-terminus: Adenine phosphoribosyltransferase (172 aa).

Belongs to the purine/pyrimidine phosphoribosyltransferase family. Homodimer.

Its subcellular location is the cytoplasm. The enzyme catalyses AMP + diphosphate = 5-phospho-alpha-D-ribose 1-diphosphate + adenine. Its pathway is purine metabolism; AMP biosynthesis via salvage pathway; AMP from adenine: step 1/1. Its function is as follows. Catalyzes a salvage reaction resulting in the formation of AMP, that is energically less costly than de novo synthesis. In Prochlorococcus marinus (strain MIT 9313), this protein is Adenine phosphoribosyltransferase.